Consider the following 63-residue polypeptide: Small ribosomal subunit protein eS17 (63 aa).

Belongs to the eukaryotic ribosomal protein eS17 family.

This chain is Small ribosomal subunit protein eS17, found in Methanosphaerula palustris (strain ATCC BAA-1556 / DSM 19958 / E1-9c).